The chain runs to 230 residues: LexA repressor (230 aa).

Residues 28 to 48 constitute a DNA-binding region (H-T-H motif); it reads LREIGAHMGIRSTNGVNDHLR. Catalysis depends on for autocatalytic cleavage activity residues Ser149 and Lys186.

Belongs to the peptidase S24 family. In terms of assembly, homodimer.

The catalysed reaction is Hydrolysis of Ala-|-Gly bond in repressor LexA.. Its function is as follows. Represses a number of genes involved in the response to DNA damage (SOS response), including recA and lexA. In the presence of single-stranded DNA, RecA interacts with LexA causing an autocatalytic cleavage which disrupts the DNA-binding part of LexA, leading to derepression of the SOS regulon and eventually DNA repair. The sequence is that of LexA repressor from Sorangium cellulosum (strain So ce56) (Polyangium cellulosum (strain So ce56)).